The sequence spans 182 residues: Transcription termination/antitermination protein NusG (182 aa).

One can recognise a KOW domain in the interval 131-161; it reads GEVVRVNEGPFADFNGTVEEVDYEKSRLKVS.

The protein belongs to the NusG family.

In terms of biological role, participates in transcription elongation, termination and antitermination. The sequence is that of Transcription termination/antitermination protein NusG from Vibrio parahaemolyticus serotype O3:K6 (strain RIMD 2210633).